The sequence spans 511 residues: ATP synthase subunit alpha (511 aa).

170-177 (GDRQTGKT) provides a ligand contact to ATP.

Belongs to the ATPase alpha/beta chains family. F-type ATPases have 2 components, CF(1) - the catalytic core - and CF(0) - the membrane proton channel. CF(1) has five subunits: alpha(3), beta(3), gamma(1), delta(1), epsilon(1). CF(0) has three main subunits: a(1), b(2) and c(9-12). The alpha and beta chains form an alternating ring which encloses part of the gamma chain. CF(1) is attached to CF(0) by a central stalk formed by the gamma and epsilon chains, while a peripheral stalk is formed by the delta and b chains.

Its subcellular location is the cell inner membrane. It catalyses the reaction ATP + H2O + 4 H(+)(in) = ADP + phosphate + 5 H(+)(out). In terms of biological role, produces ATP from ADP in the presence of a proton gradient across the membrane. The alpha chain is a regulatory subunit. The sequence is that of ATP synthase subunit alpha from Pelagibacter ubique (strain HTCC1062).